Reading from the N-terminus, the 239-residue chain is Norbelladine 4'-O-methyltransferase 5 (239 aa).

S-adenosyl-L-methionine-binding positions include Val-55, Glu-77, 79-80 (GV), Ser-85, Asp-103, and Ala-132. Asp-155 is an a divalent metal cation binding site. Asp-157 provides a ligand contact to S-adenosyl-L-methionine. A divalent metal cation contacts are provided by Asp-181 and Asn-182.

It belongs to the class I-like SAM-binding methyltransferase superfamily. Cation-dependent O-methyltransferase family. It depends on Mg(2+) as a cofactor.

The enzyme catalyses norbelladine + S-adenosyl-L-methionine = 4'-O-methylnorbelladine + S-adenosyl-L-homocysteine + H(+). It functions in the pathway alkaloid biosynthesis. Its function is as follows. 4'-O-methyltransferase converting norbelladine to 4'-O-methylnorbelladine. 4'-O-methylnorbelladine is a precursor to all Amaryllidaceae alkaloids such as galanthamine, lycorine and haemanthamine, and including haemanthamine- and crinamine-type alkaloids, promising anticancer agents. This Narcissus aff. pseudonarcissus MK-2014 (Daffodil) protein is Norbelladine 4'-O-methyltransferase 5.